We begin with the raw amino-acid sequence, 68 residues long: Conotoxin VnMMSK-01 (68 aa).

Residues 1 to 20 form the signal peptide; the sequence is MMSKLGVLLTICLLLFPLTA. A propeptide spanning residues 21–50 is cleaved from the precursor; sequence VPMDGDQPADLPALRTQDFEPERSPWFDPV. 3 disulfides stabilise this stretch: Cys53–Cys65, Cys54–Cys61, and Cys58–Cys64. At Pro63 the chain carries 4-hydroxyproline.

This sequence belongs to the conotoxin M superfamily. In terms of tissue distribution, expressed by the venom duct.

It localises to the secreted. The sequence is that of Conotoxin VnMMSK-01 from Conus ventricosus (Mediterranean cone).